The following is a 332-amino-acid chain: Ferrochelatase (332 aa).

Fe cation contacts are provided by H201 and E283.

The protein belongs to the ferrochelatase family.

Its subcellular location is the cytoplasm. It catalyses the reaction heme b + 2 H(+) = protoporphyrin IX + Fe(2+). It participates in porphyrin-containing compound metabolism; protoheme biosynthesis; protoheme from protoporphyrin-IX: step 1/1. Catalyzes the ferrous insertion into protoporphyrin IX. This Francisella tularensis subsp. holarctica (strain FTNF002-00 / FTA) protein is Ferrochelatase.